The primary structure comprises 492 residues: Glutamyl-tRNA(Gln) amidotransferase subunit A (492 aa).

Catalysis depends on charge relay system residues K79 and S154. The active-site Acyl-ester intermediate is the S178.

The protein belongs to the amidase family. GatA subfamily. As to quaternary structure, heterotrimer of A, B and C subunits.

The enzyme catalyses L-glutamyl-tRNA(Gln) + L-glutamine + ATP + H2O = L-glutaminyl-tRNA(Gln) + L-glutamate + ADP + phosphate + H(+). Allows the formation of correctly charged Gln-tRNA(Gln) through the transamidation of misacylated Glu-tRNA(Gln) in organisms which lack glutaminyl-tRNA synthetase. The reaction takes place in the presence of glutamine and ATP through an activated gamma-phospho-Glu-tRNA(Gln). The chain is Glutamyl-tRNA(Gln) amidotransferase subunit A from Acinetobacter baumannii (strain ATCC 17978 / DSM 105126 / CIP 53.77 / LMG 1025 / NCDC KC755 / 5377).